A 369-amino-acid polypeptide reads, in one-letter code: WAT1-related protein At3g53210 (369 aa).

Transmembrane regions (helical) follow at residues 12 to 31 (IAMV…MRYA), 39 to 59 (LVFP…SAYF), 72 to 92 (FLIQ…GFYI), 103 to 123 (ASAT…LLGI), 133 to 153 (GIAK…ITLY), 182 to 202 (WTLG…WIVL), 214 to 234 (FSFV…ISAY), 252 to 272 (ALLY…IYVV), 278 to 298 (LFVS…ATLA), and 303 to 323 (FYLG…LVVM). EamA domains are found at residues 24–150 (NHVI…SLVI) and 194–323 (LCWS…LVVM). A disordered region spans residues 348–369 (GDEEDYHNNKPRSPISQPLISS).

The protein belongs to the drug/metabolite transporter (DMT) superfamily. Plant drug/metabolite exporter (P-DME) (TC 2.A.7.4) family.

Its subcellular location is the membrane. The polypeptide is WAT1-related protein At3g53210 (Arabidopsis thaliana (Mouse-ear cress)).